A 1174-amino-acid chain; its full sequence is Protein kinase C-like (1174 aa).

Positions 1–68 (MANVEETVAN…LRDLDLQRTT (68 aa)) constitute an REM-1 1 domain. Residues 69–84 (SGVDNMSLQPGRSPTN) are compositionally biased toward polar residues. Residues 69-140 (SGVDNMSLQP…PPPATANKRP (72 aa)) are disordered. Over residues 96 to 123 (GYAQQDQGGYGGPQSQYSQLSGGEALQP) the composition is skewed to low complexity. Residues 124 to 134 (PRAPFAAPPPA) are compositionally biased toward pro residues. Residues 149-226 (KYDTPHLGPR…LKRYEDLHVD (78 aa)) enclose the REM-1 2 domain. The C2 domain maps to 229-349 (GDGDDNDSLD…MRRKKLETEL (121 aa)). The interval 358-406 (DKMGGHTGIQPDMQFQPPPGQSPAGGPGGGPTPAGVRPPGAPQPQTGPI) is disordered. Positions 380–389 (PAGGPGGGPT) are enriched in gly residues. Phorbol-ester/DAG-type zinc fingers lie at residues 458–506 (GHKF…VTKC) and 526–576 (PHRF…PDFC). Residues 593 to 842 (TRRGQSSSGP…PAANTQGTGK (250 aa)) are disordered. The segment covering 596-611 (GQSSSGPGMSQRTLRP) has biased composition (polar residues). Residues 624-636 (QSPGQPGQESPTQ) are compositionally biased toward low complexity. Residues 648–657 (SPPPGPPRQP) show a composition bias toward pro residues. The span at 658 to 709 (SYPSSATSVDAARASYSTTGTASTGAPTSPTSGSRPPSGPRTQSSVAAAAAA) shows a compositional bias: low complexity. The segment covering 720–744 (RSNTDYSPQSGRSSGSGYPTEQRMS) has biased composition (polar residues). Residues 786 to 802 (LPQPPPPQSPPQHPQQP) are compositionally biased toward pro residues. Residues 808–820 (KMPEQQALTQQPP) show a composition bias toward polar residues. Residues 849-1108 (FNFLAVLGKG…AQEIMSHAFF (260 aa)) form the Protein kinase domain. ATP is bound by residues 855–863 (LGKGNFGKV) and K878. Residue D974 is the Proton acceptor of the active site. The 66-residue stretch at 1109–1174 (RNINWDDIYH…RGFSYSADFA (66 aa)) folds into the AGC-kinase C-terminal domain.

The protein belongs to the protein kinase superfamily. AGC Ser/Thr protein kinase family. PKC subfamily.

The catalysed reaction is L-seryl-[protein] + ATP = O-phospho-L-seryl-[protein] + ADP + H(+). The enzyme catalyses L-threonyl-[protein] + ATP = O-phospho-L-threonyl-[protein] + ADP + H(+). The sequence is that of Protein kinase C-like (PKC1) from Cochliobolus heterostrophus (Southern corn leaf blight fungus).